The sequence spans 340 residues: MNLTGKKVILHDMSLRDGMHARQHQISLKEMVDVATGLDAAGVPLIEVTHGDGLGGASLNYGFPAHTDEEYLSAVIPKMKQAKVSALLLPGIGTGDHLRMAHDLGVNTIRVATHCTEADVSGQHISLSRELGLDTVGFLMMAHMVSPDKLLEQAKLMESYGANCIYCTDSAGYMLPGDVTSHIERLRGELKSDTQIGFHGHHNMGMSIANSLAAIQAGAERIDGSVAGLGAGAGNTPLEVFVAVLERMQVSHGINLYDIMDVAEDLVTPMMDQPIRIDRDALTLGYAGVYSSFLLFAQRAEKKHGIPARDILLELGRRGTVGGQEDMIDDTAMNMARERA.

Residues 8–260 (VILHDMSLRD…SHGINLYDIM (253 aa)) enclose the Pyruvate carboxyltransferase domain. 16–17 (RD) contacts substrate. D17 is a Mn(2+) binding site. H20 functions as the Proton acceptor in the catalytic mechanism. Residues S170 and H199 each coordinate substrate. Positions 199 and 201 each coordinate Mn(2+). Y290 contacts substrate.

Belongs to the 4-hydroxy-2-oxovalerate aldolase family.

The enzyme catalyses (S)-4-hydroxy-2-oxopentanoate = acetaldehyde + pyruvate. This chain is 4-hydroxy-2-oxovalerate aldolase, found in Shewanella pealeana (strain ATCC 700345 / ANG-SQ1).